The chain runs to 31 residues: GFLSTVKNLATNVAGTVIDTLKCKVTGGCRS.

Cys23 and Cys29 are joined by a disulfide.

In terms of tissue distribution, expressed by the skin glands.

It is found in the secreted. In terms of biological role, antimicrobial activity against Gram-negative bacterium E.coli. This chain is Palustrin-2c, found in Lithobates palustris (Pickerel frog).